We begin with the raw amino-acid sequence, 311 residues long: tRNA pseudouridine synthase B (311 aa).

Substrate is bound at residue H43. The active-site Nucleophile is the D48. Y76, Y179, and L200 together coordinate substrate.

It belongs to the pseudouridine synthase TruB family. Type 1 subfamily.

The enzyme catalyses uridine(55) in tRNA = pseudouridine(55) in tRNA. Its function is as follows. Responsible for synthesis of pseudouridine from uracil-55 in the psi GC loop of transfer RNAs. The chain is tRNA pseudouridine synthase B from Sodalis glossinidius (strain morsitans).